The primary structure comprises 444 residues: UDP-N-acetylmuramoylalanine--D-glutamate ligase (444 aa).

Residue 109–115 (GSNGKTT) coordinates ATP.

It belongs to the MurCDEF family.

It is found in the cytoplasm. The enzyme catalyses UDP-N-acetyl-alpha-D-muramoyl-L-alanine + D-glutamate + ATP = UDP-N-acetyl-alpha-D-muramoyl-L-alanyl-D-glutamate + ADP + phosphate + H(+). The protein operates within cell wall biogenesis; peptidoglycan biosynthesis. In terms of biological role, cell wall formation. Catalyzes the addition of glutamate to the nucleotide precursor UDP-N-acetylmuramoyl-L-alanine (UMA). In Bacteroides thetaiotaomicron (strain ATCC 29148 / DSM 2079 / JCM 5827 / CCUG 10774 / NCTC 10582 / VPI-5482 / E50), this protein is UDP-N-acetylmuramoylalanine--D-glutamate ligase.